We begin with the raw amino-acid sequence, 342 residues long: Oxygen-dependent coproporphyrinogen-III oxidase (342 aa).

Serine 98 is a binding site for substrate. A divalent metal cation-binding residues include histidine 102 and histidine 112. The Proton donor role is filled by histidine 112. Residue 114–116 (NYR) coordinates substrate. Positions 146 and 176 each coordinate a divalent metal cation. Residues 266–301 (YVEFNLVWDRGTIFGLQTNGRTESILMSLPPLARWE) are important for dimerization.

This sequence belongs to the aerobic coproporphyrinogen-III oxidase family. As to quaternary structure, homodimer. The cofactor is a divalent metal cation.

Its subcellular location is the cytoplasm. It catalyses the reaction coproporphyrinogen III + O2 + 2 H(+) = protoporphyrinogen IX + 2 CO2 + 2 H2O. It participates in porphyrin-containing compound metabolism; protoporphyrin-IX biosynthesis; protoporphyrinogen-IX from coproporphyrinogen-III (O2 route): step 1/1. Functionally, involved in the heme and chlorophyll biosynthesis. Catalyzes the aerobic oxidative decarboxylation of propionate groups of rings A and B of coproporphyrinogen-III to yield the vinyl groups in protoporphyrinogen-IX. The protein is Oxygen-dependent coproporphyrinogen-III oxidase of Prochlorococcus marinus (strain AS9601).